Here is a 409-residue protein sequence, read N- to C-terminus: Gamma-glutamyl phosphate reductase (409 aa).

Belongs to the gamma-glutamyl phosphate reductase family.

The protein localises to the cytoplasm. It carries out the reaction L-glutamate 5-semialdehyde + phosphate + NADP(+) = L-glutamyl 5-phosphate + NADPH + H(+). Its pathway is amino-acid biosynthesis; L-proline biosynthesis; L-glutamate 5-semialdehyde from L-glutamate: step 2/2. Catalyzes the NADPH-dependent reduction of L-glutamate 5-phosphate into L-glutamate 5-semialdehyde and phosphate. The product spontaneously undergoes cyclization to form 1-pyrroline-5-carboxylate. This chain is Gamma-glutamyl phosphate reductase, found in Koribacter versatilis (strain Ellin345).